A 254-amino-acid polypeptide reads, in one-letter code: Protein GltF (254 aa).

Residues 1–25 (MFFKKNLTTAAICAALSVAAFSAMA) form the signal peptide. A helical transmembrane segment spans residues 213-229 (PVAITAVTFPLLIDAAV).

It to E.coli YhcF.

The protein localises to the cell membrane. Involved in induction of the so-called NTR enzymes in response to nitrogen deprivation, as well as in glutamate biosynthesis. May mediate the glutamate-dependent repression of the GLT operon. This chain is Protein GltF (gltF), found in Escherichia coli (strain K12).